A 376-amino-acid polypeptide reads, in one-letter code: MMYSRFRTVAGNLNCAAKRLSSSSTTTTTTSAPSELQQNLAALRARLAMESPSLSDFISLKSDNAYSVEVGTKKKPLPKPKWMKESIPGGEKYVQIKKKLRELKLHTVCEEAKCPNLGECWSGGETGTATATIMILGDTCTRGCRFCNVKTSRTPPPPDPDEPTNVAEAIASWGLDYVVITSVDRDDLPDQGSGHFTETVQKLKALKPSMLIEALVPDFRGNAECVEKVSKSGLDVFAHNIETVEELQSAVRDHRANFKQSLDVLMMAKEYAPAGTLTKTSIMLGCGETPDQIVKTMEKVRAAGVDVMTFGQHMRPSKRHMPVSEYITPEAFEKYQTLGMEMGFRYVASGPMVRSSYKAGEFYIKSMIDSDRAASS.

Residues cysteine 109, cysteine 114, cysteine 120, cysteine 140, cysteine 144, cysteine 147, and serine 356 each contribute to the [4Fe-4S] cluster site. One can recognise a Radical SAM core domain in the interval 125–345 (ETGTATATIM…QTLGMEMGFR (221 aa)).

The protein belongs to the radical SAM superfamily. Lipoyl synthase family. The cofactor is [4Fe-4S] cluster.

Its subcellular location is the mitochondrion. The catalysed reaction is [[Fe-S] cluster scaffold protein carrying a second [4Fe-4S](2+) cluster] + N(6)-octanoyl-L-lysyl-[protein] + 2 oxidized [2Fe-2S]-[ferredoxin] + 2 S-adenosyl-L-methionine + 4 H(+) = [[Fe-S] cluster scaffold protein] + N(6)-[(R)-dihydrolipoyl]-L-lysyl-[protein] + 4 Fe(3+) + 2 hydrogen sulfide + 2 5'-deoxyadenosine + 2 L-methionine + 2 reduced [2Fe-2S]-[ferredoxin]. Its pathway is protein modification; protein lipoylation via endogenous pathway; protein N(6)-(lipoyl)lysine from octanoyl-[acyl-carrier-protein]: step 2/2. Its function is as follows. Catalyzes the radical-mediated insertion of two sulfur atoms into the C-6 and C-8 positions of the octanoyl moiety bound to the lipoyl domains of lipoate-dependent enzymes, thereby converting the octanoylated domains into lipoylated derivatives. This is Lipoyl synthase 2, mitochondrial from Pisum sativum (Garden pea).